The chain runs to 181 residues: MSSLLQGVNLYLIGMMGAGKTTVGHLLAKELGYGFLDTDNVIAQATKKSINEIFAEAGEAGFRQIESDVLAQVCSYTKLTVATGGGIVLRRENWSYLHHGLILWLDVPVDILYARLAADTTRPLLQDDDPKGKLRSLLEQRTPLYSQADLRICVNAEETPEQIANKVMQAIPSVLKQTASN.

17-22 (GAGKTT) provides a ligand contact to ATP. A Mg(2+)-binding site is contributed by Thr21. The substrate site is built by Asp39, Arg63, and Gly85. An ATP-binding site is contributed by Arg122. Arg141 provides a ligand contact to substrate.

Belongs to the shikimate kinase family. As to quaternary structure, monomer. The cofactor is Mg(2+).

It localises to the cytoplasm. The catalysed reaction is shikimate + ATP = 3-phosphoshikimate + ADP + H(+). It participates in metabolic intermediate biosynthesis; chorismate biosynthesis; chorismate from D-erythrose 4-phosphate and phosphoenolpyruvate: step 5/7. Catalyzes the specific phosphorylation of the 3-hydroxyl group of shikimic acid using ATP as a cosubstrate. The polypeptide is Shikimate kinase (Nostoc sp. (strain PCC 7120 / SAG 25.82 / UTEX 2576)).